We begin with the raw amino-acid sequence, 453 residues long: Formimidoylglutamate deiminase (453 aa).

2 residues coordinate Zn(2+): H56 and H58. Positions 61, 82, 121, 206, and 209 each coordinate N-formimidoyl-L-glutamate. H232 provides a ligand contact to Zn(2+). E235 is a binding site for N-formimidoyl-L-glutamate. Residues H269 and D320 each act as proton acceptor in the active site. D320 contributes to the Zn(2+) binding site.

It belongs to the metallo-dependent hydrolases superfamily. In terms of assembly, homodimer. It depends on Zn(2+) as a cofactor.

It carries out the reaction N-formimidoyl-L-glutamate + H2O = N-formyl-L-glutamate + NH4(+). It participates in amino-acid degradation; L-histidine degradation into L-glutamate; L-glutamate from N-formimidoyl-L-glutamate (deiminase route): step 1/2. With respect to regulation, inhibited by the metal chelator dipicolinate. Inhibited by N-formimino-L-aspartate and N-guanidino-L-glutaric acid. Functionally, catalyzes the hydrolysis of N-formimino-L-glutamate to N-formyl-L-glutamate and ammonia. The polypeptide is Formimidoylglutamate deiminase (Pseudomonas aeruginosa (strain ATCC 15692 / DSM 22644 / CIP 104116 / JCM 14847 / LMG 12228 / 1C / PRS 101 / PAO1)).